We begin with the raw amino-acid sequence, 362 residues long: Cobalt-precorrin-5B C(1)-methyltransferase (362 aa).

The protein belongs to the CbiD family.

It catalyses the reaction Co-precorrin-5B + S-adenosyl-L-methionine = Co-precorrin-6A + S-adenosyl-L-homocysteine. It participates in cofactor biosynthesis; adenosylcobalamin biosynthesis; cob(II)yrinate a,c-diamide from sirohydrochlorin (anaerobic route): step 6/10. Its function is as follows. Catalyzes the methylation of C-1 in cobalt-precorrin-5B to form cobalt-precorrin-6A. This Burkholderia thailandensis (strain ATCC 700388 / DSM 13276 / CCUG 48851 / CIP 106301 / E264) protein is Cobalt-precorrin-5B C(1)-methyltransferase.